We begin with the raw amino-acid sequence, 327 residues long: Methionyl-tRNA formyltransferase (327 aa).

Position 121–124 (121–124) interacts with (6S)-5,6,7,8-tetrahydrofolate; that stretch reads SLLP.

This sequence belongs to the Fmt family.

It carries out the reaction L-methionyl-tRNA(fMet) + (6R)-10-formyltetrahydrofolate = N-formyl-L-methionyl-tRNA(fMet) + (6S)-5,6,7,8-tetrahydrofolate + H(+). Functionally, attaches a formyl group to the free amino group of methionyl-tRNA(fMet). The formyl group appears to play a dual role in the initiator identity of N-formylmethionyl-tRNA by promoting its recognition by IF2 and preventing the misappropriation of this tRNA by the elongation apparatus. This chain is Methionyl-tRNA formyltransferase, found in Burkholderia pseudomallei (strain 668).